The sequence spans 380 residues: Protein kinase ORF15 (380 aa).

Residues 93 to 371 (FIPVKVAGCL…LLIAQLTKFI (279 aa)) form the Protein kinase domain. Lys-118 serves as a coordination point for ATP. Asp-217 serves as the catalytic Proton acceptor.

Belongs to the protein kinase superfamily. Ser/Thr protein kinase family.

It catalyses the reaction L-seryl-[protein] + ATP = O-phospho-L-seryl-[protein] + ADP + H(+). It carries out the reaction L-threonyl-[protein] + ATP = O-phospho-L-threonyl-[protein] + ADP + H(+). The polypeptide is Protein kinase ORF15 (ORF15) (Ictalurid herpesvirus 1 (strain Auburn) (IcHV-1)).